We begin with the raw amino-acid sequence, 600 residues long: UvrABC system protein C (600 aa).

The 86-residue stretch at 15 to 100 (NSAGVYQYFN…IKQLHPKYNI (86 aa)) folds into the GIY-YIG domain. The region spanning 203 to 238 (SILIKNLEKQMLVLAQNENYEEAAKVRDQIVTIKDL) is the UVR domain.

This sequence belongs to the UvrC family. As to quaternary structure, interacts with UvrB in an incision complex.

The protein resides in the cytoplasm. Its function is as follows. The UvrABC repair system catalyzes the recognition and processing of DNA lesions. UvrC both incises the 5' and 3' sides of the lesion. The N-terminal half is responsible for the 3' incision and the C-terminal half is responsible for the 5' incision. In Campylobacter jejuni subsp. jejuni serotype O:6 (strain 81116 / NCTC 11828), this protein is UvrABC system protein C.